A 318-amino-acid chain; its full sequence is NADH-ubiquinone oxidoreductase chain 1 (318 aa).

8 helical membrane passes run 2–22 (FMIN…FLTL), 68–88 (ISMF…MWIP), 100–120 (LGVL…LWSG), 147–167 (AIIL…TLII), 172–192 (VWLI…TLAE), 217–237 (AGPF…MNIF), 253–273 (ELYT…FLWI), and 294–314 (LPLT…LSSI).

The protein belongs to the complex I subunit 1 family.

It localises to the mitochondrion inner membrane. The catalysed reaction is a ubiquinone + NADH + 5 H(+)(in) = a ubiquinol + NAD(+) + 4 H(+)(out). Its function is as follows. Core subunit of the mitochondrial membrane respiratory chain NADH dehydrogenase (Complex I) that is believed to belong to the minimal assembly required for catalysis. Complex I functions in the transfer of electrons from NADH to the respiratory chain. The immediate electron acceptor for the enzyme is believed to be ubiquinone. This Ovis aries (Sheep) protein is NADH-ubiquinone oxidoreductase chain 1 (MT-ND1).